Consider the following 242-residue polypeptide: DnaJ homolog subfamily B member 6 (242 aa).

The J domain maps to 3 to 69; sequence EYYDVLGVQR…KKRDIYDKYG (67 aa).

In terms of assembly, homooligomer.

It is found in the cytoplasm. Its subcellular location is the perinuclear region. The protein localises to the nucleus. Has a stimulatory effect on the ATPase activity of HSP70 in a dose-dependent and time-dependent manner and hence acts as a co-chaperone of HSP70. Plays an indispensable role in the organization of KRT8/KRT18 filaments. Acts as an endogenous molecular chaperone for neuronal proteins including huntingtin. Suppresses aggregation and toxicity of polyglutamine-containing, aggregation-prone proteins. Also reduces cellular toxicity and caspase-3 activity. This Xenopus tropicalis (Western clawed frog) protein is DnaJ homolog subfamily B member 6.